Reading from the N-terminus, the 279-residue chain is uncharacterized protein (279 aa).

The protein belongs to the PhzF family.

This is an uncharacterized protein from Vibrio cholerae serotype O1 (strain ATCC 39315 / El Tor Inaba N16961).